The following is a 61-amino-acid chain: Copper metallothionein 1-1 (61 aa).

A propeptide spanning residues 1 to 8 (MFSELINF) is cleaved from the precursor. Positions 15, 17, 19, 22, and 28 each coordinate Cu cation. A Glycyl lysine isopeptide (Lys-Gly) (interchain with G-Cter in ubiquitin) cross-link involves residue lysine 30. Cu cation is bound by residues cysteine 32, cysteine 34, cysteine 38, cysteine 44, and cysteine 46. Positions 37–61 (GCNSDDKCPCGNKSEETKKSCCSGK) are disordered. Positions 40–55 (SDDKCPCGNKSEETKK) are enriched in basic and acidic residues.

This sequence belongs to the metallothionein superfamily. Type 12 family.

Its function is as follows. Protects the cell against copper toxicity by tightly chelating copper ions. May also act as a depository for copper designated for the effective transfer into the apo forms of copper proteins. This is Copper metallothionein 1-1 (CUP1-1) from Saccharomyces cerevisiae (strain ATCC 204508 / S288c) (Baker's yeast).